The primary structure comprises 260 residues: Small ribosomal subunit protein uS2 (260 aa).

The segment at G224–A260 is disordered. Residues A243–A260 show a composition bias toward acidic residues.

This sequence belongs to the universal ribosomal protein uS2 family.

The chain is Small ribosomal subunit protein uS2 from Oenococcus oeni (strain ATCC BAA-331 / PSU-1).